Reading from the N-terminus, the 162-residue chain is ATP-dependent Clp protease adapter protein CLPS1, chloroplastic (162 aa).

Residues 1-58 (MAASCLRPAPTASAQMMTRSPVAGLPRPCSALQRSGCTLQGAFGTFAPQTTRTFVVTW) constitute a chloroplast transit peptide.

This sequence belongs to the ClpS family.

The protein resides in the plastid. It localises to the chloroplast stroma. In terms of biological role, small adapter protein that modulate the activity of plastid Clp protease system (CLPC). Probably involved in substrate selection for plastid CLPC. The chain is ATP-dependent Clp protease adapter protein CLPS1, chloroplastic from Chlamydomonas reinhardtii (Chlamydomonas smithii).